We begin with the raw amino-acid sequence, 398 residues long: O-methyltransferase penC (398 aa).

S-adenosyl-L-methionine is bound at residue aspartate 263. Histidine 305 functions as the Proton acceptor in the catalytic mechanism.

Belongs to the class I-like SAM-binding methyltransferase superfamily. Cation-independent O-methyltransferase family.

It functions in the pathway secondary metabolite biosynthesis. It participates in alkaloid biosynthesis. Its pathway is mycotoxin biosynthesis. O-methyltransferase; part of the gene cluster that mediates the biosynthesis of penigequinolones, potent insecticidal alkaloids that contain a highly modified 10-carbon prenyl group. The first stage is catalyzed by the nonribosomal peptide synthetase penN that condenses anthranilic acid and O-methyl-L-tyrosine to produce 4'-methoxycyclopeptin. 4'-methoxycyclopeptin is then converted to 4'-methoxydehydrocyclopeptin by the ketoglutarate-dependent dioxygenase penM through dehydrogenation to form a double bond between C-alpha and C-beta of the O-methyltyrosine side chain. PenM also converts its first product methoxydehydrocyclopeptin to 4'-methoxycyclopenin. The following conversion of 4'methoxycyclopenin into 4'-methoxyviridicatin is catalyzed by the cyclopenase penL. 4'-methoxyviridicatin is the precursor of quinolone natural products, and is further converted to quinolinone B. The prenyltransferase penI then catalyzes the canonical Friedel-Crafts alkylation of quinolinone B with dimethylallyl cation to yield dimethylallyl quinolone, which is subjected to FAD-dependent dehydrogenation by the FAD-linked oxidoreductase penH to yield conjugated aryl diene. The delta(3') double bond then serves as the site of the second alkylation with DMAPP catalyzed by the prenyltransferase penG to yield a carbenium ion intermediate, which can be attacked by H(2)O to yield a styrenyl quinolone containing a C3'-hydroxyprenyl chain, or undergo cyclization to yield yaequinolones J1 and J2. The conversion of the styrenyl quinolone into the tetrahydrofuran-containing yaequinolone C is performed by the FAD-dependent monooxygenase penE and involves epoxidation of the terminal C7'-C8' olefin, followed by epoxide ring opening initiated by the C3' hydroxyl group. The predicted cysteine hydrolase penJ acts as an epoxide hydrolase that enhances the rate of the 5-exo-tet cyclization step, increasing the yield of yaequinolone C. PenF catalyzes the cationic rearrangement of the epoxide formed by penE (before ring opening to produce yaequinolone C) into yaequinolone D. Finally, the short-chain dehydrogenase/reductase (SDR)-like reductase penD, catalyzes both the dehydration of yaequinolone D and the reduction of the resulting oxonium to yield penigequinolone. The protein is O-methyltransferase penC of Penicillium thymicola.